The following is a 406-amino-acid chain: 8-amino-7-oxononanoate synthase (406 aa).

Arg20 contacts substrate. Residue 116-117 (GY) coordinates pyridoxal 5'-phosphate. His141 contacts substrate. Residues Ser187, His215, and Thr243 each contribute to the pyridoxal 5'-phosphate site. At Lys246 the chain carries N6-(pyridoxal phosphate)lysine. Thr366 is a substrate binding site.

Belongs to the class-II pyridoxal-phosphate-dependent aminotransferase family. BioF subfamily. Homodimer. Requires pyridoxal 5'-phosphate as cofactor.

It catalyses the reaction 6-carboxyhexanoyl-[ACP] + L-alanine + H(+) = (8S)-8-amino-7-oxononanoate + holo-[ACP] + CO2. It functions in the pathway cofactor biosynthesis; biotin biosynthesis. Functionally, catalyzes the decarboxylative condensation of pimeloyl-[acyl-carrier protein] and L-alanine to produce 8-amino-7-oxononanoate (AON), [acyl-carrier protein], and carbon dioxide. The sequence is that of 8-amino-7-oxononanoate synthase from Cupriavidus metallidurans (strain ATCC 43123 / DSM 2839 / NBRC 102507 / CH34) (Ralstonia metallidurans).